We begin with the raw amino-acid sequence, 264 residues long: Probable aquaporin TIP3-1 (264 aa).

The next 2 helical transmembrane spans lie at 28 to 48 (AAIS…GSIL) and 62 to 82 (GLVA…AVAV). The NPA 1 signature appears at 90–92 (NPA). Transmembrane regions (helical) follow at residues 105 to 125 (LIRA…ATLL), 149 to 169 (AVLL…ATVI), and 176 to 196 (VGTI…LAGG). Residues 204-206 (NPA) carry the NPA 2 motif. Residues 224–244 (YWLGPFVGAGLAGLLYEYLVI) form a helical membrane-spanning segment.

It belongs to the MIP/aquaporin (TC 1.A.8) family. TIP (TC 1.A.8.10) subfamily. In terms of tissue distribution, expressed in leaves and at lower levels in roots.

Its subcellular location is the vacuole membrane. Its function is as follows. Aquaporins facilitate the transport of water and small neutral solutes across cell membranes. May be involved in transport from the vacuolar compartment to the cytoplasm. The chain is Probable aquaporin TIP3-1 (TIP3-1) from Oryza sativa subsp. japonica (Rice).